A 189-amino-acid polypeptide reads, in one-letter code: Inner membrane-spanning protein YciB (189 aa).

5 helical membrane passes run 4–24 (FFEF…DIYI), 53–73 (ITFG…DDVF), 76–96 (WKVT…QFFY), 121–141 (MAWA…AFSL), and 149–169 (FKVF…GLYI).

This sequence belongs to the YciB family.

The protein resides in the cell inner membrane. Functionally, plays a role in cell envelope biogenesis, maintenance of cell envelope integrity and membrane homeostasis. This chain is Inner membrane-spanning protein YciB, found in Psychromonas ingrahamii (strain DSM 17664 / CCUG 51855 / 37).